The sequence spans 235 residues: MAVEDTPKSVVTEEAKPNSIENPIDRYHEEGDDAEEGEIAGGEGDGNVDESSKSGVPESHPLEHSWTFWFDNPAVKSKQTSWGSSLRPVFTFSTVEEFWSLYNNMKHPSKLAHGADFYCFKHIIEPKWEDPICANGGKWTMTFPKEKSDKSWLYTLLALIGEQFDHGDEICGAVVNIRGKQERISIWTKNASNEAAQVSIGKQWKEFLDYNNSIGFIIHEDAKKLDRNAKNAYTA.

A compositionally biased stretch (basic and acidic residues) spans 1 to 16; the sequence is MAVEDTPKSVVTEEAK. The segment at 1–59 is disordered; it reads MAVEDTPKSVVTEEAKPNSIENPIDRYHEEGDDAEEGEIAGGEGDGNVDESSKSGVPES. EIF4G-binding stretches follow at residues 60–63 and 70–106; these read HPLE and FDNPAVKSKQTSWGSSLRPVFTFSTVEEFWSLYNNMK. MRNA contacts are provided by residues 78 to 83, K110, and 128 to 129; these read KQTSWG and WE. C133 and C171 are joined by a disulfide. Residues 154–163 form an EIF4G-binding region; that stretch reads YTLLALIGEQ. MRNA contacts are provided by residues 178–183 and 223–227; these read RGKQER and KKLDR.

Belongs to the eukaryotic initiation factor 4E family. As to quaternary structure, EIF4F is a multi-subunit complex, the composition of which varies with external and internal environmental conditions. It is composed of at least EIF4A, EIF4E and EIF4G. EIF4E is also known to interact with other partners. In higher plants two isoforms of EIF4F have been identified, named isoform EIF4F and isoform EIF(iso)4F. Isoform EIF4F has subunits p220 and p26, whereas isoform EIF(iso)4F has subunits p82 and p28. Interacts directly with EXA1. In terms of assembly, (Microbial infection) Interacts with viral genome-linked protein (VPg); this interaction is possible in susceptible hosts but impaired in resistant plants. In terms of processing, according to the redox status, the Cys-133-Cys-171 disulfide bridge may have a role in regulating protein function by affecting its ability to bind capped mRNA. Expressed in all tissues except in the cells of the specialization zone of the roots.

The protein localises to the nucleus. It is found in the cytoplasm. Its function is as follows. Component of the protein complex eIF4F, which is involved in the recognition of the mRNA cap, ATP-dependent unwinding of 5'-terminal secondary structure and recruitment of mRNA to the ribosome. Recognizes and binds the 7-methylguanosine-containing mRNA cap during an early step in the initiation of protein synthesis and facilitates ribosome binding by inducing the unwinding of the mRNAs secondary structures. Key component of recessive resistance to potyviruses. (Microbial infection) Susceptibility host factor required for viral infection by recruiting viral RNAs to the host ribosomal complex via an interaction with viral genome-linked protein (VPg). In Arabidopsis thaliana (Mouse-ear cress), this protein is Eukaryotic translation initiation factor 4E-1.